A 129-amino-acid polypeptide reads, in one-letter code: Fluoride-specific ion channel FluC 1 (129 aa).

The next 4 membrane-spanning stretches (helical) occupy residues 9 to 29 (LSVGIFAFFGGGLRAYLNLIW), 33 to 53 (GTLTANIIGCFLLAFFTYFFV), 62 to 82 (LVTGLSTGFVGSFTTFSSFNL), and 98 to 118 (IYFFSSIFIGFLFAYLGMLVG). 2 residues coordinate Na(+): glycine 72 and threonine 75.

The protein belongs to the fluoride channel Fluc/FEX (TC 1.A.43) family.

Its subcellular location is the cell membrane. The catalysed reaction is fluoride(in) = fluoride(out). Its activity is regulated as follows. Na(+) is not transported, but it plays an essential structural role and its presence is essential for fluoride channel function. Fluoride-specific ion channel. Important for reducing fluoride concentration in the cell, thus reducing its toxicity. The polypeptide is Fluoride-specific ion channel FluC 1 (Lactobacillus johnsonii (strain CNCM I-12250 / La1 / NCC 533)).